A 295-amino-acid chain; its full sequence is Bifunctional protein FolD (295 aa).

NADP(+) contacts are provided by residues 166–168, Ser-191, and Ile-232; that span reads GRS.

It belongs to the tetrahydrofolate dehydrogenase/cyclohydrolase family. Homodimer.

It carries out the reaction (6R)-5,10-methylene-5,6,7,8-tetrahydrofolate + NADP(+) = (6R)-5,10-methenyltetrahydrofolate + NADPH. The enzyme catalyses (6R)-5,10-methenyltetrahydrofolate + H2O = (6R)-10-formyltetrahydrofolate + H(+). It participates in one-carbon metabolism; tetrahydrofolate interconversion. Its function is as follows. Catalyzes the oxidation of 5,10-methylenetetrahydrofolate to 5,10-methenyltetrahydrofolate and then the hydrolysis of 5,10-methenyltetrahydrofolate to 10-formyltetrahydrofolate. The chain is Bifunctional protein FolD from Wolbachia pipientis subsp. Culex pipiens (strain wPip).